A 99-amino-acid chain; its full sequence is Large ribosomal subunit protein uL23 (99 aa).

The protein belongs to the universal ribosomal protein uL23 family. As to quaternary structure, part of the 50S ribosomal subunit. Contacts protein L29, and trigger factor when it is bound to the ribosome.

One of the early assembly proteins it binds 23S rRNA. One of the proteins that surrounds the polypeptide exit tunnel on the outside of the ribosome. Forms the main docking site for trigger factor binding to the ribosome. This chain is Large ribosomal subunit protein uL23, found in Ectopseudomonas mendocina (strain ymp) (Pseudomonas mendocina).